A 638-amino-acid polypeptide reads, in one-letter code: Ubiquitin-like-specific protease 2 (638 aa).

Basic and acidic residues predominate over residues M1 to S12. Disordered stretches follow at residues M1–L79 and P238–D314. Polar residues predominate over residues P238–T249. A compositionally biased stretch (low complexity) spans S250–S264. Polar residues predominate over residues T267–D314. Catalysis depends on residues H440 and D494. A Phosphothreonine modification is found at T526. C544 is an active-site residue. The segment covering N610–S619 has biased composition (polar residues). Residues N610 to N638 are disordered. Residues N620 to L631 show a composition bias toward acidic residues.

Belongs to the peptidase C48 family.

The protein localises to the nucleus. This Schizosaccharomyces pombe (strain 972 / ATCC 24843) (Fission yeast) protein is Ubiquitin-like-specific protease 2 (ulp2).